Reading from the N-terminus, the 396-residue chain is L-lactate dehydrogenase (396 aa).

The 380-residue stretch at 1–380 folds into the FMN hydroxy acid dehydrogenase domain; that stretch reads MIISAASDYR…SGDSLVQELG (380 aa). Tyrosine 24 serves as a coordination point for substrate. Positions 106 and 127 each coordinate FMN. Residue tyrosine 129 coordinates substrate. FMN is bound at residue threonine 155. Residue arginine 164 participates in substrate binding. An FMN-binding site is contributed by lysine 251. The active-site Proton acceptor is histidine 275. Residue arginine 278 coordinates substrate. 306–330 provides a ligand contact to FMN; it reads DSGIRNGLDVVRMIALGADTVLLGR.

It belongs to the FMN-dependent alpha-hydroxy acid dehydrogenase family. FMN is required as a cofactor.

It localises to the cell inner membrane. It catalyses the reaction (S)-lactate + A = pyruvate + AH2. Functionally, catalyzes the conversion of L-lactate to pyruvate. Is coupled to the respiratory chain. This chain is L-lactate dehydrogenase, found in Salmonella choleraesuis (strain SC-B67).